The following is a 562-amino-acid chain: Apical membrane antigen 1 (562 aa).

The signal sequence occupies residues 1-21; it reads MNKIYCILFLSAQCLVHMGKC. The Extracellular segment spans residues 22-484; that stretch reads EPNQKPSRLT…QYAQGESKNQ (463 aa). N84 and N176 each carry an N-linked (GlcNAc...) asparagine glycan. Cystine bridges form between C94/C247, C162/C192, C208/C220, C265/C363, C282/C354, C388/C444, C432/C449, and C434/C451. N226 carries an N-linked (GlcNAc...) asparagine glycan. 2 N-linked (GlcNAc...) asparagine glycosylation sites follow: N405 and N441. A helical transmembrane segment spans residues 485-507; it reads MLLIIIGITGGVCVVALASMFYF. Residues 508–562 lie on the Cytoplasmic side of the membrane; it reads RKKAHNDKYDKMEQADGYGKPTTRKDEMLDPEASFWGEEKRASHTTPVLMEKPYY. The tract at residues 519–543 is disordered; sequence MEQADGYGKPTTRKDEMLDPEASFW.

The protein belongs to the apicomplexan parasites AMA1 family.

It is found in the membrane. Involved in parasite invasion of erythrocytes. The protein is Apical membrane antigen 1 (AMA-1) of Plasmodium fragile.